A 373-amino-acid polypeptide reads, in one-letter code: Probable dual-specificity RNA methyltransferase RlmN (373 aa).

The active-site Proton acceptor is Glu-111. One can recognise a Radical SAM core domain in the interval 117–356; it reads GPGRLTACLS…LRKSYGTSIH (240 aa). A disulfide bridge connects residues Cys-124 and Cys-359. Residues Cys-131, Cys-135, and Cys-138 each coordinate [4Fe-4S] cluster. Residues 183–184, Ser-216, 239–241, and Asn-316 each bind S-adenosyl-L-methionine; these read GE and SLH. Catalysis depends on Cys-359, which acts as the S-methylcysteine intermediate.

Belongs to the radical SAM superfamily. RlmN family. The cofactor is [4Fe-4S] cluster.

It localises to the cytoplasm. The enzyme catalyses adenosine(2503) in 23S rRNA + 2 reduced [2Fe-2S]-[ferredoxin] + 2 S-adenosyl-L-methionine = 2-methyladenosine(2503) in 23S rRNA + 5'-deoxyadenosine + L-methionine + 2 oxidized [2Fe-2S]-[ferredoxin] + S-adenosyl-L-homocysteine. The catalysed reaction is adenosine(37) in tRNA + 2 reduced [2Fe-2S]-[ferredoxin] + 2 S-adenosyl-L-methionine = 2-methyladenosine(37) in tRNA + 5'-deoxyadenosine + L-methionine + 2 oxidized [2Fe-2S]-[ferredoxin] + S-adenosyl-L-homocysteine. Specifically methylates position 2 of adenine 2503 in 23S rRNA and position 2 of adenine 37 in tRNAs. The sequence is that of Probable dual-specificity RNA methyltransferase RlmN from Chlorobium phaeovibrioides (strain DSM 265 / 1930) (Prosthecochloris vibrioformis (strain DSM 265)).